A 231-amino-acid chain; its full sequence is NADH-ubiquinone oxidoreductase chain 4 (231 aa).

6 helical membrane passes run Pro-1–Ile-21, Met-34–Leu-54, Ile-63–Gly-85, Gly-89–Tyr-111, Ile-118–Leu-138, and Leu-156–Ser-176.

It belongs to the complex I subunit 4 family.

Its subcellular location is the mitochondrion membrane. The enzyme catalyses a ubiquinone + NADH + 5 H(+)(in) = a ubiquinol + NAD(+) + 4 H(+)(out). Core subunit of the mitochondrial membrane respiratory chain NADH dehydrogenase (Complex I) that is believed to belong to the minimal assembly required for catalysis. Complex I functions in the transfer of electrons from NADH to the respiratory chain. The immediate electron acceptor for the enzyme is believed to be ubiquinone. The polypeptide is NADH-ubiquinone oxidoreductase chain 4 (MT-ND4) (Calloselasma rhodostoma (Malayan pit viper)).